The chain runs to 217 residues: Large ribosomal subunit protein uL29m (217 aa).

The protein belongs to the universal ribosomal protein uL29 family. In terms of assembly, component of the mitochondrial large ribosomal subunit. Mature mitochondrial ribosomes consist of a small (37S) and a large (54S) subunit. The 37S subunit contains at least 33 different proteins and 1 molecule of RNA (15S). The 54S subunit contains at least 45 different proteins and 1 molecule of RNA (21S).

The protein resides in the mitochondrion. In Neosartorya fischeri (strain ATCC 1020 / DSM 3700 / CBS 544.65 / FGSC A1164 / JCM 1740 / NRRL 181 / WB 181) (Aspergillus fischerianus), this protein is Large ribosomal subunit protein uL29m (mrpl4).